We begin with the raw amino-acid sequence, 497 residues long: Cytochrome P450 monooxygenase cicH (497 aa).

Residues 2–19 traverse the membrane as a helical segment; sequence AILVRLFFALFVVSVYFF. Heme is bound at residue Cys439. N-linked (GlcNAc...) asparagine glycosylation occurs at Asn443.

This sequence belongs to the cytochrome P450 family. Heme serves as cofactor.

Its subcellular location is the membrane. It participates in phytotoxin biosynthesis. Cytochrome P450 monooxygenase; part of the gene cluster that mediates the biosynthesis of cichorine, a phytotoxin active against knapweed, corn, and soybeans. The first step in the pathway is performed by the non-reducing polyketide synthase pkbA that condenses one acetyl-CoA starter unit with 3 malonyl-CoA units. PkbA also catalyzes one methylation step to produce 3-methylorsellinate. The nonribosomal peptide synthase-like protein cicB, the cytochrome P450 monooxygenase cicH and the O-methyltransferase cicE are involved in the conversion of 3-methylorsellinate into nidulol. CicB converts 3-methylorsellinate to a yet unidentified intermediate, cicH may play a ring-closing role for cichorine and cicE is plausibly responsible for the methylation of one of the phenol groups. The oxidoreductase cicC acts downstream with still unidentified enzymes to further convert nidulol into cichorine. This Emericella nidulans (strain FGSC A4 / ATCC 38163 / CBS 112.46 / NRRL 194 / M139) (Aspergillus nidulans) protein is Cytochrome P450 monooxygenase cicH.